We begin with the raw amino-acid sequence, 340 residues long: KRR1 small subunit processome component homolog (340 aa).

In terms of domain architecture, KH spans 124 to 192 (DIIKIGNLVH…VRDIVLETMN (69 aa)). A compositionally biased stretch (basic residues) spans 228-244 (KNKNISKRKQPKSKKPK). Disordered stretches follow at residues 228-259 (KNKN…ESKI) and 271-324 (NQEQ…KVDV). Residues 269-302 (FLNQEQKQAKRNQERSAKQADAAKKQDERRNKDF) are a coiled coil. Basic and acidic residues-rich tracts occupy residues 275-301 (KQAK…RNKD) and 309-324 (APSR…KVDV).

This sequence belongs to the KRR1 family. Monomer. Component of the ribosomal small subunit (SSU) processome.

Its subcellular location is the nucleus. It localises to the nucleolus. Functionally, required for 40S ribosome biogenesis. Involved in nucleolar processing of pre-18S ribosomal RNA and ribosome assembly. Binds to RNA. Required for female germline development, cell viability during eye development and for survival of dividing cells and epithelial cells during early wing disk development. This Drosophila persimilis (Fruit fly) protein is KRR1 small subunit processome component homolog.